We begin with the raw amino-acid sequence, 101 residues long: Apolipoprotein C-II (101 aa).

The N-terminal stretch at Met-1–Gly-22 is a signal peptide. The tract at residues Thr-66 to Met-74 is lipid binding. Positions Ser-78–Glu-101 are lipoprotein lipase cofactor.

This sequence belongs to the apolipoprotein C2 family. Post-translationally, proapolipoprotein C-II is synthesized as a sialic acid containing glycoprotein which is subsequently desialylated prior to its proteolytic processing. Proapolipoprotein C-II, the major form found in plasma undergoes proteolytic cleavage of its N-terminal hexapeptide to generate apolipoprotein C-II, which occurs as the minor form in plasma.

The protein localises to the secreted. Functionally, component of chylomicrons, very low-density lipoproteins (VLDL), low-density lipoproteins (LDL), and high-density lipoproteins (HDL) in plasma. Plays an important role in lipoprotein metabolism as an activator of lipoprotein lipase. Both proapolipoprotein C-II and apolipoprotein C-II can activate lipoprotein lipase. The polypeptide is Apolipoprotein C-II (APOC2) (Aotus nancymaae (Ma's night monkey)).